Consider the following 327-residue polypeptide: N-acetylmuramoyl-L-alanine amidase sle1 (327 aa).

An N-terminal signal peptide occupies residues 1 to 25; sequence MRKKIIATVIGTSALAAVTWTNADA. 3 LysM domains span residues 27–70, 86–129, and 150–193; these read TTYK…SLKV, STYT…KLKV, and TTYT…KLKV. The disordered stretch occupies residues 68–89; the sequence is LKVSGSTSSSTSSNTSTGSTYT. The segment covering 71–87 has biased composition (low complexity); sequence SGSTSSSTSSNTSTGST. Positions 203–327 constitute a Peptidase C51 domain; the sequence is GSSSTGSAGY…SQVSSYVYIH (125 aa).

It is found in the secreted. The protein resides in the cell surface. The enzyme catalyses Hydrolyzes the link between N-acetylmuramoyl residues and L-amino acid residues in certain cell-wall glycopeptides.. Peptidoglycan hydrolase involved in the splitting of the septum during cell division. The sequence is that of N-acetylmuramoyl-L-alanine amidase sle1 (sle1) from Staphylococcus saprophyticus subsp. saprophyticus (strain ATCC 15305 / DSM 20229 / NCIMB 8711 / NCTC 7292 / S-41).